The following is a 370-amino-acid chain: Glutamate 5-kinase (370 aa).

Lys-13 provides a ligand contact to ATP. The substrate site is built by Ser-52, Asp-139, and Asn-151. ATP contacts are provided by residues 171–172 (SD) and 211–217 (SGGMKSK). Residues 275-353 (KGELVLDRGA…AEIEAVLGYR (79 aa)) enclose the PUA domain.

Belongs to the glutamate 5-kinase family.

It localises to the cytoplasm. It catalyses the reaction L-glutamate + ATP = L-glutamyl 5-phosphate + ADP. It functions in the pathway amino-acid biosynthesis; L-proline biosynthesis; L-glutamate 5-semialdehyde from L-glutamate: step 1/2. Its function is as follows. Catalyzes the transfer of a phosphate group to glutamate to form L-glutamate 5-phosphate. This Thermus thermophilus (strain ATCC BAA-163 / DSM 7039 / HB27) protein is Glutamate 5-kinase.